The sequence spans 126 residues: Large ribosomal subunit protein bL17 (126 aa).

It belongs to the bacterial ribosomal protein bL17 family. As to quaternary structure, part of the 50S ribosomal subunit. Contacts protein L32.

This is Large ribosomal subunit protein bL17 from Rickettsia felis (strain ATCC VR-1525 / URRWXCal2) (Rickettsia azadi).